The primary structure comprises 252 residues: 5'-nucleotidase SurE (252 aa).

Residues D8, D9, S39, and N91 each contribute to the a divalent metal cation site.

The protein belongs to the SurE nucleotidase family. Requires a divalent metal cation as cofactor.

The protein localises to the cytoplasm. It catalyses the reaction a ribonucleoside 5'-phosphate + H2O = a ribonucleoside + phosphate. Its function is as follows. Nucleotidase that shows phosphatase activity on nucleoside 5'-monophosphates. This Legionella pneumophila (strain Paris) protein is 5'-nucleotidase SurE.